The sequence spans 201 residues: Lipopolysaccharide core heptose(II)-phosphate phosphatase (201 aa).

The signal sequence occupies residues 1–35; the sequence is MLAFTLRFIKNKRYLATLAGALVIIAGLTSQHAWS.

The protein belongs to the phosphoglycerate mutase family. Ais subfamily.

The protein localises to the periplasm. It functions in the pathway bacterial outer membrane biogenesis; lipopolysaccharide metabolism. Catalyzes the dephosphorylation of heptose(II) of the outer membrane lipopolysaccharide core. The chain is Lipopolysaccharide core heptose(II)-phosphate phosphatase from Salmonella heidelberg (strain SL476).